The sequence spans 319 residues: Methionyl-tRNA formyltransferase (319 aa).

113–116 contributes to the (6S)-5,6,7,8-tetrahydrofolate binding site; it reads SLLP.

It belongs to the Fmt family.

It carries out the reaction L-methionyl-tRNA(fMet) + (6R)-10-formyltetrahydrofolate = N-formyl-L-methionyl-tRNA(fMet) + (6S)-5,6,7,8-tetrahydrofolate + H(+). Its function is as follows. Attaches a formyl group to the free amino group of methionyl-tRNA(fMet). The formyl group appears to play a dual role in the initiator identity of N-formylmethionyl-tRNA by promoting its recognition by IF2 and preventing the misappropriation of this tRNA by the elongation apparatus. This chain is Methionyl-tRNA formyltransferase, found in Pseudomonas fluorescens (strain Pf0-1).